Reading from the N-terminus, the 20-residue chain is Venom protease (20 aa).

The protein belongs to the peptidase S1 family. Contains 3 disulfide bonds. In terms of processing, N-glycosylated. In terms of tissue distribution, expressed by the venom duct.

Its subcellular location is the secreted. This chain is Venom protease, found in Bombus terrestris (Buff-tailed bumblebee).